The chain runs to 858 residues: Elongation factor 2 (858 aa).

The region spanning 17-362 (ANIRNMSVIA…MITIHLPSPV (346 aa)) is the tr-type G domain. Residue 26–33 (AHVDHGKS) coordinates GTP. Threonine 54 is subject to Phosphothreonine. The residue at position 57 (threonine 57) is a Phosphothreonine; by EEF2K. Phosphothreonine is present on threonine 59. N6-succinyllysine is present on lysine 152. Residues 158–161 (NKMD) and 216–218 (SGL) contribute to the GTP site. N6-acetyllysine is present on lysine 235. The residue at position 239 (lysine 239) is an N6-acetyllysine; alternate. Residue lysine 239 forms a Glycyl lysine isopeptide (Lys-Gly) (interchain with G-Cter in SUMO1); alternate linkage. Tyrosine 265 carries the phosphotyrosine; by CSK modification. The residue at position 272 (lysine 272) is an N6-acetyllysine; alternate. N6-succinyllysine; alternate is present on lysine 272. The residue at position 275 (lysine 275) is an N6-acetyllysine. Lysine 322 is covalently cross-linked (Glycyl lysine isopeptide (Lys-Gly) (interchain with G-Cter in SUMO)). Serine 325 bears the Phosphoserine mark. Phosphotyrosine; by CSK is present on tyrosine 373. Threonine 435 carries the phosphothreonine modification. 2 positions are modified to N6-acetyllysine: lysine 439 and lysine 445. Residue serine 502 is modified to Phosphoserine. At lysine 525 the chain carries N6,N6,N6-trimethyllysine; by EEF2KMT. Lysine 529 participates in a covalent cross-link: Glycyl lysine isopeptide (Lys-Gly) (interchain with G-Cter in SUMO). An N6-succinyllysine modification is found at lysine 572. Position 595 is a phosphoserine; by CDK2 (serine 595). Position 619 is an N6-acetyllysine (lysine 619). Histidine 715 carries the diphthamide modification.

The protein belongs to the TRAFAC class translation factor GTPase superfamily. Classic translation factor GTPase family. EF-G/EF-2 subfamily. As to quaternary structure, binds to 80S ribosomes. Actively translating ribosomes show mutually exclusive binding of eIF5a (EIF5A or EIF5A2) and EEF2/eEF2. Interacts with SERBP1; interaction sequesters EEF2/eEF2 at the A-site of the ribosome, thereby blocking the interaction sites of the mRNA-tRNA complex, promoting ribosome stabilization and hibernation. Interacts with HABP4; interaction takes place at the A-site of hibernating ribosomes and promotes ribosome stabilization. Component of the mRNA surveillance SURF complex, at least composed of ERF1, ERF3 (ERF3A or ERF3B), EEF2, UPF1/RENT1, SMG1, SMG8 and SMG9. Interacts with RBPMS2. Post-translationally, phosphorylation by EF-2 kinase completely inactivates EF-2; it requires prior phosphorylation by CDK2 at Ser-595 during mitotic prometaphase. Phosphorylation by CSK promotes SUMOylation, proteolytic cleavage, and nuclear translocation if the C-terminal fragment. In terms of processing, diphthamide is 2-[3-carboxyamido-3-(trimethyl-ammonio)propyl]histidine. ISGylated. Post-translationally, proteolytically processed at two sites following phosphorylation by CSK. In terms of processing, SUMOylated following phosphorylation by CSK, promotes proteolytic cleavage.

It is found in the cytoplasm. It localises to the nucleus. It catalyses the reaction GTP + H2O = GDP + phosphate + H(+). Functionally, catalyzes the GTP-dependent ribosomal translocation step during translation elongation. During this step, the ribosome changes from the pre-translocational (PRE) to the post-translocational (POST) state as the newly formed A-site-bound peptidyl-tRNA and P-site-bound deacylated tRNA move to the P and E sites, respectively. Catalyzes the coordinated movement of the two tRNA molecules, the mRNA and conformational changes in the ribosome. The sequence is that of Elongation factor 2 (EEF2) from Bos taurus (Bovine).